A 203-amino-acid chain; its full sequence is Ribosome maturation factor RimP (203 aa).

Residues 1 to 21 (MSDSEATTSTDRSESNSTATI) show a composition bias toward polar residues. The tract at residues 1–23 (MSDSEATTSTDRSESNSTATIHN) is disordered.

It belongs to the RimP family.

Its subcellular location is the cytoplasm. Functionally, required for maturation of 30S ribosomal subunits. This Paenarthrobacter aurescens (strain TC1) protein is Ribosome maturation factor RimP.